The sequence spans 95 residues: Co-chaperonin GroES (95 aa).

Belongs to the GroES chaperonin family. As to quaternary structure, heptamer of 7 subunits arranged in a ring. Interacts with the chaperonin GroEL.

The protein resides in the cytoplasm. Together with the chaperonin GroEL, plays an essential role in assisting protein folding. The GroEL-GroES system forms a nano-cage that allows encapsulation of the non-native substrate proteins and provides a physical environment optimized to promote and accelerate protein folding. GroES binds to the apical surface of the GroEL ring, thereby capping the opening of the GroEL channel. The sequence is that of Co-chaperonin GroES from Ruthia magnifica subsp. Calyptogena magnifica.